The following is an 80-amino-acid chain: Protein transport protein SSS1 (80 aa).

Residues 1 to 46 (MARASEKGEEKKQSNNQVEKLVEAPVEFVREGTQFLAKCKKPDLKE) are Cytoplasmic-facing. Residues 47–75 (YTKIVKAVGIGFIAVGIIGYAIKLIHIPI) traverse the membrane as a helical segment. The Extracellular portion of the chain corresponds to 76 to 80 (RYVIV).

The protein belongs to the SecE/SEC61-gamma family. Component of the heterotrimeric Sec61 complex, which is composed of SSH1, SBH1 and SSS1. Presumably three to four Sec61 heterotrimers assemble into an oligomeric ring with a central aqueous pore. In cotranslational ER import, the pore diameter varies from 9-15 A in a ribosome-free resting state to 40-60 A in a functional state when associated with the ribosome. The Sec61 complex is part of a channel-forming translocon complex whose composition seem to change dependent upon different functional states. During post-translational ER import the Sec61 complex associates with the Sec62/63 complex to form the Sec complex. SSH1 is a component of the heterotrimeric Ssh1 complex, which is composed of SSH1, SBH2 and SSS1. SSS1 interacts with OST1, OST4, SWP1 and WBP1, components of the OT complex.

The protein resides in the endoplasmic reticulum membrane. Its function is as follows. Part of the Sec61 complex, which is the major component of channel-forming translocon complex that mediates protein translocation across the endoplasmic reticulum (ER). The functional states of the translocon complex include co- and post-translational ER import, cotranslational membrane protein integration and retrograde transport of misfolded proteins out of the ER. In the cotranslational pathway, ribosomes synthesizing presecretory proteins are targeted to the translocon by the cytosolic signal recognition particle (SRP) and its ER-localized receptor. The association of the Sec61 complex with the ribosome is mediated by the 28S rRNA of the large ribosomal subunit. SRP-independent post-translational translocation requires the association of additional factors, such as the Sec62/63 complex and KAR2. Also part of the Ssh1 complex, which probably is the major component of a channel-forming translocon complex that may function exclusively in the cotranslational pathway of protein ER import. This Saccharomyces cerevisiae (strain ATCC 204508 / S288c) (Baker's yeast) protein is Protein transport protein SSS1 (SSS1).